The chain runs to 249 residues: Chymase (249 aa).

The first 19 residues, 1 to 19 (MHCLPLTLLLLLLCSRAEA), serve as a signal peptide directing secretion. Residues 20–21 (EE) constitute a propeptide, activation peptide. Positions 22–245 (IIGGTESKPH…YRPWINKVLK (224 aa)) constitute a Peptidase S1 domain. The cysteines at positions 51 and 67 are disulfide-linked. Active-site charge relay system residues include histidine 66 and aspartate 110. 2 disulfide bridges follow: cysteine 144–cysteine 209 and cysteine 175–cysteine 188. Serine 203 (charge relay system) is an active-site residue.

This sequence belongs to the peptidase S1 family. Granzyme subfamily.

The protein resides in the secreted. Its subcellular location is the cytoplasmic granule. The enzyme catalyses Preferential cleavage: Phe-|-Xaa &gt; Tyr-|-Xaa &gt; Trp-|-Xaa &gt; Leu-|-Xaa.. Its function is as follows. Major secreted protease of mast cells with suspected roles in vasoactive peptide generation, extracellular matrix degradation, and regulation of gland secretion. The protein is Chymase (CMA1) of Canis lupus familiaris (Dog).